The sequence spans 475 residues: E3 ubiquitin-protein ligase TRIM62 (475 aa).

The RING-type zinc-finger motif lies at 11–54 (CSICLSIYQDPVSLGCEHYFCRRCITEHWVRQEAQGARDCPECR). The segment at 88-128 (RAARPCQAHDKVKLFCLTDRALLCFFCDEPALHEQHQVTGI) adopts a B box-type zinc-finger fold. Zn(2+) contacts are provided by Cys-93, His-96, Cys-114, and His-120. Residues 127–241 (GIDDAFDELQ…LQERLAETDR (115 aa)) adopt a coiled-coil conformation. Residues 277 to 475 (PLQYTIWKSL…QPLRINTVRI (199 aa)) enclose the B30.2/SPRY domain.

Belongs to the TRIM/RBCC family. Interacts with the ubiquitin-conjugating enzyme, UBE2D2. Post-translationally, polyubiquitinated, autoubiquitinated in the presence of UBE2D2.

Its subcellular location is the cytoplasm. The catalysed reaction is S-ubiquitinyl-[E2 ubiquitin-conjugating enzyme]-L-cysteine + [acceptor protein]-L-lysine = [E2 ubiquitin-conjugating enzyme]-L-cysteine + N(6)-ubiquitinyl-[acceptor protein]-L-lysine.. Its pathway is protein modification; protein ubiquitination. In terms of biological role, E3 ubiquitin ligase that plays a role in antifungal immunity by mediating 'Lys-27'-linked ubiquitination of CARD9 downstream of C-type lectin receptors; leading to CARD9 activation, followed by activation of NF-kappa-B and MAP kinase p38 pathways. E3 ubiquitin ligase activity is dependent on E2 ubiquitin-conjugating enzyme UBE2D2. The polypeptide is E3 ubiquitin-protein ligase TRIM62 (Homo sapiens (Human)).